The sequence spans 193 residues: MNFLAHLHLAHLADNSLSGNLLADFVRGNPATHYPPDVVEGIYMHRRIDVMTDNLPEAREAREWFRHETRRVAPITLDVMWDHFLSRHWTQISPDFPLQAFVGYAHAQVATILPDFPPRFVNLNDYLWSEKWLERYRDMDFIQNVLNGMANRRPRLDALRDSWYDLDAHYDALEERFWHFYPRMMAQAARKAL.

This sequence belongs to the AcpH family.

The catalysed reaction is holo-[ACP] + H2O = apo-[ACP] + (R)-4'-phosphopantetheine + H(+). Its function is as follows. Converts holo-ACP to apo-ACP by hydrolytic cleavage of the phosphopantetheine prosthetic group from ACP. In Salmonella paratyphi A (strain ATCC 9150 / SARB42), this protein is Acyl carrier protein phosphodiesterase.